The chain runs to 430 residues: Probable carboxypeptidase AFLA_037450 (430 aa).

Residues 1–16 (MKSIYSLVLCTALTAA) form the signal peptide. Residue Asn-84 is glycosylated (N-linked (GlcNAc...) asparagine). Residue Asp-156 participates in Zn(2+) binding. The active-site Proton acceptor is Glu-188. Glu-189 contacts Zn(2+). A glycan (N-linked (GlcNAc...) asparagine) is linked at Asn-285.

This sequence belongs to the peptidase M20A family. Zn(2+) serves as cofactor.

The protein localises to the secreted. This is Probable carboxypeptidase AFLA_037450 from Aspergillus flavus (strain ATCC 200026 / FGSC A1120 / IAM 13836 / NRRL 3357 / JCM 12722 / SRRC 167).